The chain runs to 187 residues: Peptide deformylase (187 aa).

Fe cation is bound by residues C94 and H136. The active site involves E137. H140 lines the Fe cation pocket.

The protein belongs to the polypeptide deformylase family. The cofactor is Fe(2+).

The enzyme catalyses N-terminal N-formyl-L-methionyl-[peptide] + H2O = N-terminal L-methionyl-[peptide] + formate. Its function is as follows. Removes the formyl group from the N-terminal Met of newly synthesized proteins. Requires at least a dipeptide for an efficient rate of reaction. N-terminal L-methionine is a prerequisite for activity but the enzyme has broad specificity at other positions. The sequence is that of Peptide deformylase from Chlorobaculum tepidum (strain ATCC 49652 / DSM 12025 / NBRC 103806 / TLS) (Chlorobium tepidum).